A 153-amino-acid polypeptide reads, in one-letter code: SsrA-binding protein (153 aa).

It belongs to the SmpB family.

The protein localises to the cytoplasm. Required for rescue of stalled ribosomes mediated by trans-translation. Binds to transfer-messenger RNA (tmRNA), required for stable association of tmRNA with ribosomes. tmRNA and SmpB together mimic tRNA shape, replacing the anticodon stem-loop with SmpB. tmRNA is encoded by the ssrA gene; the 2 termini fold to resemble tRNA(Ala) and it encodes a 'tag peptide', a short internal open reading frame. During trans-translation Ala-aminoacylated tmRNA acts like a tRNA, entering the A-site of stalled ribosomes, displacing the stalled mRNA. The ribosome then switches to translate the ORF on the tmRNA; the nascent peptide is terminated with the 'tag peptide' encoded by the tmRNA and targeted for degradation. The ribosome is freed to recommence translation, which seems to be the essential function of trans-translation. This chain is SsrA-binding protein, found in Paramagnetospirillum magneticum (strain ATCC 700264 / AMB-1) (Magnetospirillum magneticum).